A 110-amino-acid polypeptide reads, in one-letter code: DNA-directed RNA polymerase subunit omega (110 aa).

Belongs to the RNA polymerase subunit omega family. As to quaternary structure, the RNAP catalytic core consists of 2 alpha, 1 beta, 1 beta' and 1 omega subunit. When a sigma factor is associated with the core the holoenzyme is formed, which can initiate transcription.

It carries out the reaction RNA(n) + a ribonucleoside 5'-triphosphate = RNA(n+1) + diphosphate. Its function is as follows. Promotes RNA polymerase assembly. Latches the N- and C-terminal regions of the beta' subunit thereby facilitating its interaction with the beta and alpha subunits. The polypeptide is DNA-directed RNA polymerase subunit omega (Vesicomyosocius okutanii subsp. Calyptogena okutanii (strain HA)).